The primary structure comprises 458 residues: Bifunctional protein GlmU (458 aa).

The tract at residues Met1–Arg230 is pyrophosphorylase. UDP-N-acetyl-alpha-D-glucosamine is bound by residues Leu9–Gly12, Lys23, Gln73, and Gly78–Thr79. Asp103 contributes to the Mg(2+) binding site. UDP-N-acetyl-alpha-D-glucosamine is bound by residues Gly140, Glu155, Asn170, and Asn228. Asn228 lines the Mg(2+) pocket. The linker stretch occupies residues Val231–Asn251. Positions Gly252–Asp458 are N-acetyltransferase. UDP-N-acetyl-alpha-D-glucosamine is bound by residues Arg333 and Lys351. His363 acts as the Proton acceptor in catalysis. 2 residues coordinate UDP-N-acetyl-alpha-D-glucosamine: Tyr366 and Asn377. Acetyl-CoA is bound by residues Asn386–Tyr387, Ser405, Ala423, and Arg440.

The protein in the N-terminal section; belongs to the N-acetylglucosamine-1-phosphate uridyltransferase family. This sequence in the C-terminal section; belongs to the transferase hexapeptide repeat family. As to quaternary structure, homotrimer. Mg(2+) serves as cofactor.

The protein resides in the cytoplasm. It carries out the reaction alpha-D-glucosamine 1-phosphate + acetyl-CoA = N-acetyl-alpha-D-glucosamine 1-phosphate + CoA + H(+). The catalysed reaction is N-acetyl-alpha-D-glucosamine 1-phosphate + UTP + H(+) = UDP-N-acetyl-alpha-D-glucosamine + diphosphate. Its pathway is nucleotide-sugar biosynthesis; UDP-N-acetyl-alpha-D-glucosamine biosynthesis; N-acetyl-alpha-D-glucosamine 1-phosphate from alpha-D-glucosamine 6-phosphate (route II): step 2/2. It participates in nucleotide-sugar biosynthesis; UDP-N-acetyl-alpha-D-glucosamine biosynthesis; UDP-N-acetyl-alpha-D-glucosamine from N-acetyl-alpha-D-glucosamine 1-phosphate: step 1/1. The protein operates within bacterial outer membrane biogenesis; LPS lipid A biosynthesis. Catalyzes the last two sequential reactions in the de novo biosynthetic pathway for UDP-N-acetylglucosamine (UDP-GlcNAc). The C-terminal domain catalyzes the transfer of acetyl group from acetyl coenzyme A to glucosamine-1-phosphate (GlcN-1-P) to produce N-acetylglucosamine-1-phosphate (GlcNAc-1-P), which is converted into UDP-GlcNAc by the transfer of uridine 5-monophosphate (from uridine 5-triphosphate), a reaction catalyzed by the N-terminal domain. In Enterococcus faecalis (strain ATCC 700802 / V583), this protein is Bifunctional protein GlmU.